The primary structure comprises 282 residues: 4-diphosphocytidyl-2-C-methyl-D-erythritol kinase (282 aa).

Lys-12 is an active-site residue. 95-105 (PMGGGIGGGSS) is an ATP binding site. Asp-137 is a catalytic residue.

It belongs to the GHMP kinase family. IspE subfamily.

The catalysed reaction is 4-CDP-2-C-methyl-D-erythritol + ATP = 4-CDP-2-C-methyl-D-erythritol 2-phosphate + ADP + H(+). The protein operates within isoprenoid biosynthesis; isopentenyl diphosphate biosynthesis via DXP pathway; isopentenyl diphosphate from 1-deoxy-D-xylulose 5-phosphate: step 3/6. Functionally, catalyzes the phosphorylation of the position 2 hydroxy group of 4-diphosphocytidyl-2C-methyl-D-erythritol. In Pseudomonas aeruginosa (strain UCBPP-PA14), this protein is 4-diphosphocytidyl-2-C-methyl-D-erythritol kinase.